The primary structure comprises 277 residues: Sulfur carrier protein FdhD (277 aa).

Residue Cys123 is the Cysteine persulfide intermediate of the active site. A Mo-bis(molybdopterin guanine dinucleotide)-binding site is contributed by 263–268; the sequence is FVRGNK.

Belongs to the FdhD family.

Its subcellular location is the cytoplasm. In terms of biological role, required for formate dehydrogenase (FDH) activity. Acts as a sulfur carrier protein that transfers sulfur from IscS to the molybdenum cofactor prior to its insertion into FDH. This chain is Sulfur carrier protein FdhD, found in Corynebacterium efficiens (strain DSM 44549 / YS-314 / AJ 12310 / JCM 11189 / NBRC 100395).